The following is a 274-amino-acid chain: Diaminopimelate epimerase (274 aa).

3 residues coordinate substrate: Asn11, Gln44, and Asn64. The active-site Proton donor is the Cys73. Substrate is bound by residues 74-75 (GN), Asn157, Asn190, and 208-209 (ER). Cys217 (proton acceptor) is an active-site residue. 218–219 (GS) contacts substrate.

This sequence belongs to the diaminopimelate epimerase family. Homodimer.

Its subcellular location is the cytoplasm. The enzyme catalyses (2S,6S)-2,6-diaminopimelate = meso-2,6-diaminopimelate. It functions in the pathway amino-acid biosynthesis; L-lysine biosynthesis via DAP pathway; DL-2,6-diaminopimelate from LL-2,6-diaminopimelate: step 1/1. Catalyzes the stereoinversion of LL-2,6-diaminopimelate (L,L-DAP) to meso-diaminopimelate (meso-DAP), a precursor of L-lysine and an essential component of the bacterial peptidoglycan. This Shigella boydii serotype 18 (strain CDC 3083-94 / BS512) protein is Diaminopimelate epimerase.